Here is a 351-residue protein sequence, read N- to C-terminus: Increased glyphosate resistance protein (351 aa).

Residues 1-18 (MHREDDSTSTGRREERLS) are compositionally biased toward basic and acidic residues. The segment at 1–29 (MHREDDSTSTGRREERLSTGKGDSLQPGP) is disordered.

In terms of biological role, confers an increase in glyphosate resistance when expressed in E.coli. The polypeptide is Increased glyphosate resistance protein (Pseudomonas sp. (strain PG2982)).